Consider the following 163-residue polypeptide: Phosphopantetheine adenylyltransferase (163 aa).

Position 11 (Ser11) interacts with substrate. Residues Ser11–Phe12 and His19 contribute to the ATP site. Residues Lys43, Leu75, and Arg89 each coordinate substrate. Residues Gly90–Arg92, Glu100, and Tyr125–Ser131 contribute to the ATP site.

Belongs to the bacterial CoaD family. As to quaternary structure, homohexamer. The cofactor is Mg(2+).

It localises to the cytoplasm. The catalysed reaction is (R)-4'-phosphopantetheine + ATP + H(+) = 3'-dephospho-CoA + diphosphate. It participates in cofactor biosynthesis; coenzyme A biosynthesis; CoA from (R)-pantothenate: step 4/5. Reversibly transfers an adenylyl group from ATP to 4'-phosphopantetheine, yielding dephospho-CoA (dPCoA) and pyrophosphate. This chain is Phosphopantetheine adenylyltransferase, found in Lysinibacillus sphaericus (strain C3-41).